The chain runs to 445 residues: Xylose isomerase (445 aa).

Catalysis depends on residues H107 and D110. The Mg(2+) site is built by E238, E274, H277, D302, D313, D315, and D345.

The protein belongs to the xylose isomerase family. Homotetramer. Mg(2+) serves as cofactor.

It is found in the cytoplasm. It catalyses the reaction alpha-D-xylose = alpha-D-xylulofuranose. The chain is Xylose isomerase (xylA) from Bacillus subtilis (strain 168).